The sequence spans 494 residues: Guanosine-5'-triphosphate,3'-diphosphate pyrophosphatase (494 aa).

This sequence belongs to the GppA/Ppx family. GppA subfamily.

The enzyme catalyses guanosine 3'-diphosphate 5'-triphosphate + H2O = guanosine 3',5'-bis(diphosphate) + phosphate + H(+). It participates in purine metabolism; ppGpp biosynthesis; ppGpp from GTP: step 2/2. Functionally, catalyzes the conversion of pppGpp to ppGpp. Guanosine pentaphosphate (pppGpp) is a cytoplasmic signaling molecule which together with ppGpp controls the 'stringent response', an adaptive process that allows bacteria to respond to amino acid starvation, resulting in the coordinated regulation of numerous cellular activities. The chain is Guanosine-5'-triphosphate,3'-diphosphate pyrophosphatase from Shigella flexneri serotype 5b (strain 8401).